Reading from the N-terminus, the 468-residue chain is Phenylalanine--tRNA ligase alpha subunit (468 aa).

L-phenylalanine-binding positions include Thr311, 350 to 352 (QLD), and Phe390. A Mg(2+)-binding site is contributed by Glu392.

This sequence belongs to the class-II aminoacyl-tRNA synthetase family. Phe-tRNA synthetase alpha subunit type 2 subfamily. As to quaternary structure, tetramer of two alpha and two beta subunits. Mg(2+) is required as a cofactor.

It localises to the cytoplasm. The catalysed reaction is tRNA(Phe) + L-phenylalanine + ATP = L-phenylalanyl-tRNA(Phe) + AMP + diphosphate + H(+). The chain is Phenylalanine--tRNA ligase alpha subunit from Saccharolobus solfataricus (strain ATCC 35092 / DSM 1617 / JCM 11322 / P2) (Sulfolobus solfataricus).